Here is a 417-residue protein sequence, read N- to C-terminus: 3-isopropylmalate dehydratase large subunit 2 (417 aa).

Positions 298, 358, and 361 each coordinate [4Fe-4S] cluster.

This sequence belongs to the aconitase/IPM isomerase family. LeuC type 2 subfamily. Heterodimer of LeuC and LeuD. Requires [4Fe-4S] cluster as cofactor.

The enzyme catalyses (2R,3S)-3-isopropylmalate = (2S)-2-isopropylmalate. Its pathway is amino-acid biosynthesis; L-leucine biosynthesis; L-leucine from 3-methyl-2-oxobutanoate: step 2/4. Catalyzes the isomerization between 2-isopropylmalate and 3-isopropylmalate, via the formation of 2-isopropylmaleate. The polypeptide is 3-isopropylmalate dehydratase large subunit 2 (Thermotoga maritima (strain ATCC 43589 / DSM 3109 / JCM 10099 / NBRC 100826 / MSB8)).